A 517-amino-acid chain; its full sequence is Protein AGENET DOMAIN (AGD)-CONTAINING P1 (517 aa).

The segment at 1 to 35 (MLRPRRSLGVSSPAKQRKKAAPKNSMATRANRKRL) is disordered. Plant Agenet, chromatin-binding regions lie at residues 37–111 (SYLK…PPMS) and 117–173 (KKIV…EWVD). The disordered stretch occupies residues 177-202 (KPPLEETEEEEDESEEDKLDDSEDEE). A compositionally biased stretch (acidic residues) spans 181 to 202 (EETEEEEDESEEDKLDDSEDEE). Plant Agenet, chromatin-binding regions lie at residues 219 to 287 (QMFS…PRDE), 289 to 345 (IDFA…DWVD), 378 to 446 (QAFS…LESV), and 449 to 505 (SPFE…EWID).

Expressed ubiquitously during vegetative stage, in meristems (e.g. root tips and shoot apical meristem), and in ovules and young seeds during reproductive stage.

The protein localises to the nucleus. Heterochromatin-binding protein that preferentially occupies long transposons and specifically recognizes the histone H3 'Lys-9' methylation (H3K9me) marks, with a stronger affinity for dimethylated H3K9 (H3K9me2). Required for transcriptional silencing, non-CG DNA methylation (e.g. CHG and CHH regions), and H3K9 dimethylation (H3K9me2) at some loci. Mediates heterochromatin phase separation and chromocenter formation. The sequence is that of Protein AGENET DOMAIN (AGD)-CONTAINING P1 from Arabidopsis thaliana (Mouse-ear cress).